The sequence spans 125 residues: Ribonuclease P protein component (125 aa).

Belongs to the RnpA family. As to quaternary structure, consists of a catalytic RNA component (M1 or rnpB) and a protein subunit.

The catalysed reaction is Endonucleolytic cleavage of RNA, removing 5'-extranucleotides from tRNA precursor.. Its function is as follows. RNaseP catalyzes the removal of the 5'-leader sequence from pre-tRNA to produce the mature 5'-terminus. It can also cleave other RNA substrates such as 4.5S RNA. The protein component plays an auxiliary but essential role in vivo by binding to the 5'-leader sequence and broadening the substrate specificity of the ribozyme. In Idiomarina loihiensis (strain ATCC BAA-735 / DSM 15497 / L2-TR), this protein is Ribonuclease P protein component.